The sequence spans 602 residues: Multiple epidermal growth factor-like domains protein 9 (602 aa).

The signal sequence occupies residues 1–30; that stretch reads MNGGAERAMRSLPSLGGLALLCCAAAAAAA. Residues 31–514 are Extracellular-facing; that stretch reads AVASAASAGN…LADVSWTQFN (484 aa). Residues 38 to 199 form a disordered region; it reads AGNVTGGGGA…PATEAPSSPP (162 aa). Residue Asn-40 is glycosylated (N-linked (GlcNAc...) asparagine). Low complexity-rich tracts occupy residues 68 to 85 and 139 to 166; these read PRAT…PPRA and APTR…TVPA. The span at 167-176 shows a compositional bias: pro residues; that stretch reads PTTPRTPTPD. Asn-182 carries N-linked (GlcNAc...) asparagine glycosylation. Over residues 187–199 the composition is skewed to pro residues; it reads PTPPATEAPSSPP. Intrachain disulfides connect Cys-204–Cys-217, Cys-206–Cys-224, Cys-226–Cys-235, Cys-238–Cys-251, Cys-254–Cys-266, Cys-256–Cys-272, Cys-274–Cys-283, Cys-286–Cys-298, Cys-301–Cys-310, Cys-303–Cys-317, Cys-320–Cys-329, Cys-332–Cys-346, Cys-349–Cys-360, Cys-351–Cys-371, Cys-374–Cys-383, Cys-386–Cys-397, Cys-400–Cys-415, Cys-402–Cys-422, Cys-425–Cys-434, and Cys-437–Cys-449. Laminin EGF-like domains are found at residues 204–253, 254–300, 301–348, 349–399, and 400–451; these read CNCS…LCQP, CDCS…GCLP, CQCN…ECLR, CPCS…ICRK, and CQCH…NCIK. Residues Asn-205 and Asn-218 are each glycosylated (N-linked (GlcNAc...) asparagine). A glycan (N-linked (GlcNAc...) asparagine) is linked at Asn-245. An N-linked (GlcNAc...) asparagine glycan is attached at Asn-267. A glycan (N-linked (GlcNAc...) asparagine) is linked at Asn-305. Asn-428 carries N-linked (GlcNAc...) asparagine glycosylation. Residues Asn-468, Asn-481, and Asn-500 are each glycosylated (N-linked (GlcNAc...) asparagine). A helical membrane pass occupies residues 515–535; the sequence is IIILTVIIIVVVLLMGFVGAV. At 536–602 the chain is on the cytoplasmic side; it reads YMYREYQNRK…LTTPIHNYKA (67 aa).

It is found in the membrane. The sequence is that of Multiple epidermal growth factor-like domains protein 9 (MEGF9) from Homo sapiens (Human).